A 655-amino-acid polypeptide reads, in one-letter code: Interferon-induced GTP-binding protein Mx2 (655 aa).

Polar residues predominate over residues 1 to 18 (MVLSTEENTGVDSVNLPS). Residues 1–28 (MVLSTEENTGVDSVNLPSGETGLGEKDQ) are disordered. Residues 60 to 333 (DLALPAIAVI…LISHICKSLP (274 aa)) form the Dynamin-type G domain. Residues 70–77 (GDQSSGKS) are G1 motif. 70-77 (GDQSSGKS) serves as a coordination point for GTP. The segment at 95-97 (VTR) is G2 motif. Residues 171 to 174 (DLPG) are G3 motif. GTP-binding positions include 171 to 175 (DLPGI) and 240 to 243 (TKPD). A G4 motif region spans residues 240–243 (TKPD). Positions 272–275 (KCRG) are G5 motif. The tract at residues 542-562 (EAEEEKKTKHGTSSSSQSQDL) is disordered. The span at 552 to 562 (GTSSSSQSQDL) shows a compositional bias: low complexity. The GED domain occupies 567-655 (MAEIFQHLNA…ARRRLAKFPG (89 aa)).

The protein belongs to the TRAFAC class dynamin-like GTPase superfamily. Dynamin/Fzo/YdjA family.

It localises to the cytoplasm. Functionally, interferon-induced dynamin-like GTPase with antiviral activity against vesicular stomatitis virus (VSV) and Hantaan virus (HNTV). The chain is Interferon-induced GTP-binding protein Mx2 (Mx2) from Mus musculus (Mouse).